The following is a 325-amino-acid chain: Myo-inositol dehydrogenase Hyg17 (325 aa).

This sequence belongs to the Gfo/Idh/MocA family.

The catalysed reaction is myo-inositol + NAD(+) = myo-inosose-5 + NADH + H(+). The protein operates within antibiotic biosynthesis. Dehydrogenase involved in the biosynthesis of the aminocyclitol moiety of hygromycin A, a broad-spectrum antibiotic. Catalyzes the NAD(+)-dependent oxidation of myo-inositol to myo-inosose-5 (neo-inosose). Shows reduced activity with scyllo-inositol, minimal activity with L-chiro-inositol and no activity with D-glucose, D-chiro-inositol, epi-inositol, muco-inositol and allo-inositol. Is specific for NAD(+) and cannot use NADP(+). The chain is Myo-inositol dehydrogenase Hyg17 from Streptomyces leeuwenhoekii.